A 359-amino-acid polypeptide reads, in one-letter code: Probable E3 ubiquitin-protein ligase LUL4 (359 aa).

Residues 1 to 35 form a disordered region; it reads MGISFSNNNRRRDNNNRRHLHHYPPPPPYYYLDPP. Gly2 is lipidated: N-myristoyl glycine. A compositionally biased stretch (pro residues) spans 23-35; that stretch reads YPPPPPYYYLDPP. The tract at residues 148 to 267 is DAR2 domain; that stretch reads FVFDALFDGS…GSFKVKVVKQ (120 aa). The segment at 302 to 341 adopts an RING-type zinc-finger fold; that stretch reads CVICMTEAKDTAVLPCRHLCMCSDCAKELRLQSNKCPICR.

Belongs to the RING-type zinc finger family. LOG2 subfamily.

It catalyses the reaction S-ubiquitinyl-[E2 ubiquitin-conjugating enzyme]-L-cysteine + [acceptor protein]-L-lysine = [E2 ubiquitin-conjugating enzyme]-L-cysteine + N(6)-ubiquitinyl-[acceptor protein]-L-lysine.. The protein operates within protein modification; protein ubiquitination. Acts as an E3 ubiquitin-protein ligase, or as part of E3 complex, which accepts ubiquitin from specific E2 ubiquitin-conjugating enzymes and then transfers it to substrates (in vitro). The chain is Probable E3 ubiquitin-protein ligase LUL4 (LUL4) from Arabidopsis thaliana (Mouse-ear cress).